The following is a 925-amino-acid chain: Antiviral innate immune response receptor RIG-I (925 aa).

2 CARD domains span residues 1–87 and 92–172; these read MTTE…GLYE and WDFK…KTLK. S8 carries the (Microbial infection) Phosphoserine modification. At S8 the chain carries Phosphoserine. Glycyl lysine isopeptide (Lys-Gly) (interchain with G-Cter in ubiquitin) cross-links involve residues K48, K96, K154, and K164. T170 is subject to Phosphothreonine. Glycyl lysine isopeptide (Lys-Gly) (interchain with G-Cter in ubiquitin) cross-links involve residues K172, K181, K193, and K203. The segment at 218–925 is interaction with ZC3HAV1; it reads ECQNLSENSC…IPFDPAEMSK (708 aa). A Helicase ATP-binding domain is found at 251–430; that stretch reads ALPAMKGKNT…DEALDYICKL (180 aa). 264–271 contributes to the ATP binding site; it reads APTGCGKT. The DECH box motif lies at 372–375; that stretch reads DECH. 2 positions are modified to (Microbial infection) Deamidated asparagine; by herpes simplex virus 1/HHV-1 UL37: N495 and N549. Residues 610–776 enclose the Helicase C-terminal domain; it reads KLEDLCFILQ…RLQTWDEAVF (167 aa). The interval 735 to 925 is mediates interaction with RNF135; the sequence is GSKCFLLTSN…IPFDPAEMSK (191 aa). T770 is subject to Phosphothreonine; by CK2. The RLR CTR domain occupies 794 to 925; sequence QEKPKPVPDK…IPFDPAEMSK (132 aa). Position 810 (C810) interacts with Zn(2+). A Glycyl lysine isopeptide (Lys-Gly) (interchain with G-Cter in ubiquitin) cross-link involves residue K812. C813 provides a ligand contact to Zn(2+). Residues S854 and S855 each carry the phosphoserine; by CK2 modification. At K858 the chain carries N6-acetyllysine. Zn(2+)-binding residues include C864 and C869. K909 is modified (N6-acetyllysine).

The protein belongs to the helicase family. RLR subfamily. Monomer; maintained as a monomer in an autoinhibited state. Upon binding of viral RNAs and conformational shift, homooligomerizes and forms filaments on these molecules. Interacts (via tandem CARD domain) with MAVS/IPS1 promoting its filamentation. Interacts with DHX58/LGP2, IKBKE, TBK1 and STING1. Interacts (via CARD domain) with TRIM25 (via SPRY domain). Interacts (double-stranded RNA-bound oligomeric form) with RNF135 (homodimer); involved in RNA length-dependent activation of the RIG-I signaling pathway. Interacts with CYLD. Interacts with NLRC5; blocks the interaction of MAVS/IPS1 to RIGI. Interacts with SRC. Interacts with DDX60. Interacts with isoform 2 of ZC3HAV1 (via zinc-fingers) in an RNA-dependent manner. Interacts (via tandem CARD domain) with SEC14L1; the interaction is direct and impairs the interaction of RIGI with MAVS/IPS1. Interacts with VCP/p97; interaction is direct and allows the recruitment of RNF125 and subsequent ubiquitination and degradation. Interacts with NOP53; may regulate RIGI through USP15-mediated 'Lys-63'-linked deubiquitination. Interacts with SIGLEC10, CBL and PTPN11; within a negative feedback loop leading to RIGI degradation. Interacts with LRRC25. Interacts with ZCCHC3; leading to activation of RIGI. Interacts with RNF123. Interacts with UBE2D3 and UBE2N; E2 ubiquitin ligases involved in RNF135-mediated ubiquitination of RIGI and activation of the RIG-I signaling pathway. Interacts with IFIT3. Interacts with DDX3X. Interacts with RTN3. Interacts with ARL16; this interaction is GTP-dependent and induced upon viral infection; this interaction suppresses the RNA sensing activity of RIGI. Interacts with DHX16; this interaction enhances RIGI-mediated antiviral response. Interacts with IRGM; promoting RIGI degradation. Interacts with IFI6; this interaction inhibits RIGI activation. Interacts with ECSIT; this interaction bridges RIGI to the MAVS complex at the mitochondrion. Interacts with YWHAE; this interaction drives RIGI at the mitochondrion. In terms of assembly, (Microbial infection) Interacts with protein Z of Guanarito virus, Machupo virus, Junin arenavirus and Sabia virus. This interaction disrupts its interaction with MAVS/IPS1, impeding downstream IRF3 and NF-kappa-B activation and resulting in decreased IFN-beta induction. As to quaternary structure, (Microbial infection) Interacts (via CARD domain) with Human respiratory syncytial virus A non-structural protein 2 (NS2) and this interaction disrupts its interaction with MAVS/IPS1, impeding downstream IRF3 activation. (Microbial infection) Interacts with Rotavirus A non-structural protein 1 (NSP1) and this interaction induces down-regulation of RIGI. In terms of assembly, (Microbial infection) Interacts with paramyxoviruses (Sendai virus, Nipah virus, Measles virus and Parainfluenza virus 5) protein V; this interaction inhibits TRIM25-mediated ubiquitination of RIG-I and prevents downstream RIG-I signaling thereby inhibiting the IFN responses. As to quaternary structure, (Microbial infection) Interacts with herpes simplex virus 1 protein US11; this interaction prevents the interaction of MAVS/IPS1 to RIGI. (Microbial infection) Interacts with herpes simplex virus 1 protein UL37; this interaction deaminates RIGI and inhibits its activation. In terms of assembly, (Microbial infection) Interacts with Severe fever with thrombocytopenia virus (SFTSV) NSs; this interaction this interaction sequesters RIGI in NSs-induced cytoplasmic inclusion bodies thereby inhibiting the IFN responses. Post-translationally, phosphorylated in resting cells and dephosphorylated in RNA virus-infected cells. Phosphorylation at Thr-770, Ser-854 and Ser-855 results in inhibition of its activity while dephosphorylation at these sites results in its activation. Ubiquitinated. 'Lys-63' ubiquitination by RNF135, which occurs after RNA-binding and homodimerization, releases the autoinhibition of the CARD domains by the RLR CTR domain, an essential step in the activation of the RIG-I signaling pathway. Lys-172 is the critical site of ubiquitination for MAVS/IPS1 binding and to induce anti-viral signal transduction. Lys-154, Lys-164 and Lys-172 are shared sites for RNF135-mediated and TRIM4-mediated ubiquitination. Also undergoes 'Lys-48' ubiquitination at Lys-181 by RNF125 that leads to proteasomal degradation. 'Lys-48' ubiquitination follows viral infection and is enhanced by 'Lys-63'-linked ubiquitination of the CARD domains that promotes interaction with VCP/p97 and subsequent recruitment of RNF125. Within a negative feedback loop involving SIGLEC10 and PTPN11, 'Lys-48' ubiquitination at Lys-812 by CBL also elicits the proteasomal degradation of RIGI. Deubiquitinated by CYLD, a protease that selectively cleaves 'Lys-63'-linked ubiquitin chains. Also probably deubiquitinated by USP17L2/USP17 that cleaves 'Lys-48'- and 'Lys-63'-linked ubiquitin chains and positively regulates the receptor. Ubiquitinated by TRIM40 via 'Lys-48'-linked ubiquitination; leading to proteasomal degradation. Deubiquitinated by USP27X that cleaves 'Lys-63'-linked ubiquitin chains and inhibits the innate immune receptor activity. Deubiquitinated by USP3 that also cleaves 'Lys-63'-linked ubiquitin chains and inhibits the innate immune receptor activity. Undergoes 'Lys-48'-linked ubiquitination catalyzed by MARCHF5 at Lys-193 and Lys-203, leading to proteasomal degradation. In terms of processing, phosphorylated at Ser-8 and Thr-170; these phosphorylations suppresse the TRIM25-mediated 'Lys-63'-linked ubiquitination of RIG-I and thereby prevents RIG-I downstream signaling. Dephosphorylated by phosphatases PPP1CA/PPP1CC; this step is essential to activate RIGI and initiate downstream signaling. Post-translationally, ISGylated. Conjugated to ubiquitin-like protein ISG15 upon IFN-beta stimulation. ISGylation negatively regulates its function in antiviral signaling response. Sumoylated, probably by MUL1; inhibiting its polyubiquitination. In terms of processing, acetylated in response to RNA virus infection. Deacetylated by HDAC6 in the presence of viral mRNAs which is required for detection of viral RNA by RIGI. Post-translationally, (Microbial infection) Deamidated on Asn-495 and Asn-549 by herpes simplex virus 1 protein UL37. These modifications eliminate RIGI detection of viral RNA and restriction of viral replication. Degraded via selective autophagy following interaction with IRGM. IRGM promotes RIGI recruitment to autophagosome membranes, promoting its SQSTM1/p62-dependent autophagic degradation. In terms of processing, (Microbial infection) Cleaved by the protease 3C of coxsackievirus B3, poliovirus and enterovirus 71 allowing the virus to disrupt the host type I interferon production. Post-translationally, (Microbial infection) Phosphorylated at Ser-8 by herpes simplex virus 1 protein US3 leading to inhibition of critical RIGI activation steps. In terms of tissue distribution, present in vascular smooth cells (at protein level).

The protein localises to the cytoplasm. It is found in the cell projection. The protein resides in the ruffle membrane. Its subcellular location is the cytoskeleton. It localises to the cell junction. The protein localises to the tight junction. It carries out the reaction ATP + H2O = ADP + phosphate + H(+). Innate immune receptor that senses cytoplasmic viral nucleic acids and activates a downstream signaling cascade leading to the production of type I interferons and pro-inflammatory cytokines. Forms a ribonucleoprotein complex with viral RNAs on which it homooligomerizes to form filaments. The homooligomerization allows the recruitment of RNF135 an E3 ubiquitin-protein ligase that activates and amplifies the RIG-I-mediated antiviral signaling in an RNA length-dependent manner through ubiquitination-dependent and -independent mechanisms. Upon activation, associates with mitochondria antiviral signaling protein (MAVS/IPS1) that activates the IKK-related kinases TBK1 and IKBKE which in turn phosphorylate the interferon regulatory factors IRF3 and IRF7, activating transcription of antiviral immunological genes including the IFN-alpha and IFN-beta interferons. Ligands include 5'-triphosphorylated ssRNAs and dsRNAs but also short dsRNAs (&lt;1 kb in length). In addition to the 5'-triphosphate moiety, blunt-end base pairing at the 5'-end of the RNA is very essential. Overhangs at the non-triphosphorylated end of the dsRNA RNA have no major impact on its activity. A 3'overhang at the 5'triphosphate end decreases and any 5'overhang at the 5' triphosphate end abolishes its activity. Detects both positive and negative strand RNA viruses including members of the families Paramyxoviridae: Human respiratory syncytial virus and measles virus (MeV), Rhabdoviridae: vesicular stomatitis virus (VSV), Orthomyxoviridae: influenza A and B virus, Flaviviridae: Japanese encephalitis virus (JEV), hepatitis C virus (HCV), dengue virus (DENV) and west Nile virus (WNV). It also detects rotaviruses and reoviruses. Detects and binds to SARS-CoV-2 RNAs which is inhibited by m6A RNA modifications. Also involved in antiviral signaling in response to viruses containing a dsDNA genome such as Epstein-Barr virus (EBV). Detects dsRNA produced from non-self dsDNA by RNA polymerase III, such as Epstein-Barr virus-encoded RNAs (EBERs). May play important roles in granulocyte production and differentiation, bacterial phagocytosis and in the regulation of cell migration. The polypeptide is Antiviral innate immune response receptor RIG-I (Homo sapiens (Human)).